Here is a 205-residue protein sequence, read N- to C-terminus: MSKKKGLSAEEKRTRMMEIFSETKDVFQLKDLEKIAPKEKGITAMSVKEVLQSLVDDGMVDCERIGTSNYYWAFPSKALHARKHKLEVLESQLSEGSQKHASLQKSIEKAKIGRCETEERTRLAKELSSLRDQREQLKAEVEKYKDCDPQVVEEIRQANKVAKEAANRWTDNIFAIKSWAKRKFGFEENKIDRTFGIPEDFDYID.

Serine 2 carries the N-acetylserine modification. Residues 84–173 (HKLEVLESQL…EAANRWTDNI (90 aa)) are a coiled coil.

It belongs to the MND1 family. In terms of assembly, heterodimer with PSMC3IP/HOP2. MND1-PSMC3IP interacts with DMC1 and RAD51 and binds preferentially to dsDNA.

The protein localises to the nucleus. Its function is as follows. Required for proper homologous chromosome pairing and efficient cross-over and intragenic recombination during meiosis. Stimulates both DMC1- and RAD51-mediated homologous strand assimilation, which is required for the resolution of meiotic double-strand breaks. The polypeptide is Meiotic nuclear division protein 1 homolog (Homo sapiens (Human)).